A 294-amino-acid polypeptide reads, in one-letter code: Protease HtpX (294 aa).

2 helical membrane passes run 4 to 24 and 34 to 52; these read IALF…VLSL and GLLI…VSLM. Position 139 (His139) interacts with Zn(2+). Glu140 is an active-site residue. Residue His143 participates in Zn(2+) binding. A run of 2 helical transmembrane segments spans residues 158-178 and 194-214; these read VVNT…AGFL and LIYF…ASII. Glu223 contacts Zn(2+).

The protein belongs to the peptidase M48B family. Requires Zn(2+) as cofactor.

It is found in the cell inner membrane. The protein is Protease HtpX of Klebsiella pneumoniae subsp. pneumoniae (strain ATCC 700721 / MGH 78578).